The following is a 172-amino-acid chain: Shikimate kinase (172 aa).

Position 17 to 22 (Gly-17 to Thr-22) interacts with ATP. Ser-21 is a Mg(2+) binding site. Residues Asp-39, Arg-63, and Gly-84 each coordinate substrate. An ATP-binding site is contributed by Arg-122. Arg-140 serves as a coordination point for substrate.

Belongs to the shikimate kinase family. In terms of assembly, monomer. Requires Mg(2+) as cofactor.

The protein resides in the cytoplasm. The enzyme catalyses shikimate + ATP = 3-phosphoshikimate + ADP + H(+). It participates in metabolic intermediate biosynthesis; chorismate biosynthesis; chorismate from D-erythrose 4-phosphate and phosphoenolpyruvate: step 5/7. Its function is as follows. Catalyzes the specific phosphorylation of the 3-hydroxyl group of shikimic acid using ATP as a cosubstrate. The sequence is that of Shikimate kinase from Staphylococcus haemolyticus (strain JCSC1435).